The sequence spans 1244 residues: ATP-dependent RNA helicase DHX8 (1244 aa).

Lysine 140 participates in a covalent cross-link: Glycyl lysine isopeptide (Lys-Gly) (interchain with G-Cter in SUMO2). Disordered regions lie at residues leucine 152–glycine 289 and aspartate 361–histidine 396. The span at glutamate 160–aspartate 169 shows a compositional bias: basic and acidic residues. The segment covering arginine 170 to serine 179 has biased composition (basic residues). Over residues arginine 180–arginine 220 the composition is skewed to basic and acidic residues. The segment covering aspartate 221–serine 234 has biased composition (basic residues). Residues phenylalanine 256–proline 283 are compositionally biased toward basic and acidic residues. One can recognise an S1 motif domain in the interval glycine 289–lysine 360. Over residues threonine 386–threonine 395 the composition is skewed to basic and acidic residues. A Phosphoserine modification is found at serine 419. A Glycyl lysine isopeptide (Lys-Gly) (interchain with G-Cter in SUMO2) cross-link involves residue lysine 423. Phosphoserine is present on serine 484. A Helicase ATP-binding domain is found at valine 599–proline 762. Glycine 612–threonine 619 contacts ATP. Positions aspartate 709–histidine 712 match the DEAH box motif. Residues tyrosine 780–glycine 960 enclose the Helicase C-terminal domain.

Belongs to the DEAD box helicase family. DEAH subfamily. DDX8/PRP22 sub-subfamily. Identified in the spliceosome C complex. Interacts with ARRB2; the interaction is detected in the nucleus upon OR1D2 stimulation. Interacts with SRRM2. Interacts with CACTIN.

The protein localises to the nucleus. It carries out the reaction ATP + H2O = ADP + phosphate + H(+). Its function is as follows. Involved in pre-mRNA splicing as component of the spliceosome. Facilitates nuclear export of spliced mRNA by releasing the RNA from the spliceosome. The protein is ATP-dependent RNA helicase DHX8 (Dhx8) of Mus musculus (Mouse).